The following is a 183-amino-acid chain: Dermatopontin (183 aa).

The residue at position 1 (Gln1) is a Pyrrolidone carboxylic acid. Tyr5 is subject to Sulfotyrosine. Tandem repeats lie at residues Pro8–Pro61, Asp52–Tyr57, Thr62–Tyr117, and Asp107–Phe112. The tract at residues Pro8–Tyr117 is 2 X 53-55 AA tandem repeats. 5 disulfide bridges follow: Cys32-Cys59, Cys72-Cys114, Cys88-Cys115, Cys121-Cys178, and Cys125-Cys171. The interval Asp52–Phe168 is 3 X 6 AA tandem repeats of D-R-[EQ]-W-[NQK]-[FY]. Tyr144, Tyr146, Tyr148, and Tyr149 each carry sulfotyrosine. The stretch at Asp163 to Phe168 is one 2-3 repeat. Position 176 is a sulfotyrosine (Tyr176).

Belongs to the dermatopontin family. As to quaternary structure, interacts with TGFB1, DCN and collagen. In terms of processing, sulfated on tyrosine residue(s). As to expression, detected in skin, skeletal muscle, heart, lung, articular cartilage, long bone and calvaria. Smaller amounts detected in kidney. Not detected in brain, liver or spleen.

The protein resides in the secreted. It localises to the extracellular space. It is found in the extracellular matrix. In terms of biological role, seems to mediate adhesion by cell surface integrin binding. May serve as a communication link between the dermal fibroblast cell surface and its extracellular matrix environment. Enhances TGFB1 activity. Inhibits cell proliferation. Accelerates collagen fibril formation, and stabilizes collagen fibrils against low-temperature dissociation. The protein is Dermatopontin (DPT) of Sus scrofa (Pig).